The chain runs to 2090 residues: Ninein (2090 aa).

2 EF-hand domains span residues 8-43 and 42-77; these read QHEA…LSLE and LEEV…ILSR. Ser152 is modified (phosphoserine). EF-hand domains are found at residues 182–217 and 219–252; these read WIEE…YGLQ and VDGE…NGKS. GTP is bound at residue 245–252; that stretch reads GLFKNGKS. Ser269 carries the post-translational modification Phosphoserine. 300–304 provides a ligand contact to GTP; it reads DGMGH. An EF-hand 5 domain is found at 317–352; it reads EGIENSQEILKALDFSLDGNINLTELTLALENELLV. Positions 357-570 form a coiled coil; sequence IHQAALASFK…YRAQGRVLRL (214 aa). Residue 420 to 423 participates in GTP binding; sequence RKLD. Residues 574-595 are disordered; the sequence is NSPSEEVEANSGGIEPEHGLGS. Coiled-coil stretches lie at residues 625-1027, 1068-1099, 1181-1341, and 1441-1816; these read LRLE…QATS, LSLQ…QKLE, SELE…SVVQ, and QDKH…AGGK. Residues 802–1505 form an important for interaction with CEP170 region; that stretch reads KMETECNRRT…HDLQITCSEM (704 aa). Residues 1152 to 1190 form a disordered region; that stretch reads VRDLGSTGTSSVQRQEVKIEESEASVEGFSELENSEETR. 2 positions are modified to phosphoserine: Ser1550 and Ser1837. Coiled-coil stretches lie at residues 1854-1885 and 1922-2067; these read QENE…SNLL and ANRK…QVSL.

In terms of assembly, homooligomer. Interacts with GSK3B/GSK3-beta via its C-terminal domain. Interacts with C14ORF166, such interaction may prevent its phosphorylation by GSK3B. Interacts with AUNIP (via N-terminus). Identified in a complex with AUNIP and AURKA. Interacts with CCDC120. Interacts (via C-terminus) with CEP250. Interacts with CEP170. Interacts with the gamma-tubulin ring complex component TUBGCP3. Interacts with gamma-tubulin. Isoform 6 does not interact with CEP170 or CEP250. In terms of processing, phosphorylated by AURKA/Aurora kinase A and PKA kinases but not CK2 or AURKB/ Aurora kinase B. In terms of tissue distribution, ubiquitous. Highly expressed in heart and skeletal muscle. Isoform 1 is more expressed than isoform 5.

Its subcellular location is the cytoplasm. The protein resides in the cytoskeleton. The protein localises to the microtubule organizing center. It is found in the centrosome. It localises to the centriole. Its function is as follows. Centrosomal protein required in the positioning and anchorage of the microtubule minus-end in epithelial cells. May also act as a centrosome maturation factor. May play a role in microtubule nucleation, by recruiting the gamma-tubulin ring complex to the centrosome. Overexpression does not perturb nucleation or elongation of microtubules but suppresses release of microtubules. Required for centriole organization and microtubule anchoring at the mother centriole. The protein is Ninein (NIN) of Homo sapiens (Human).